The following is an 881-amino-acid chain: Alanine--tRNA ligase (881 aa).

Residues histidine 564, histidine 568, cysteine 673, and histidine 677 each contribute to the Zn(2+) site. The segment at 848-867 (GQGGGGRPDMAQAGGPDGDK) is disordered.

The protein belongs to the class-II aminoacyl-tRNA synthetase family. The cofactor is Zn(2+).

The protein resides in the cytoplasm. The catalysed reaction is tRNA(Ala) + L-alanine + ATP = L-alanyl-tRNA(Ala) + AMP + diphosphate. In terms of biological role, catalyzes the attachment of alanine to tRNA(Ala) in a two-step reaction: alanine is first activated by ATP to form Ala-AMP and then transferred to the acceptor end of tRNA(Ala). Also edits incorrectly charged Ser-tRNA(Ala) and Gly-tRNA(Ala) via its editing domain. The protein is Alanine--tRNA ligase of Hyphomonas neptunium (strain ATCC 15444).